The primary structure comprises 950 residues: Serine/threonine-protein phosphatase 4 regulatory subunit 1 (950 aa).

9 HEAT repeats span residues 1-25 (MADLSLLQEDLQEDADGFGVDDYSS), 26-63 (ESDVIIIPSALDFVSQDEMLTPLGRLDKYAASENIFNR), 65-81 (MVARSLLDTLREVCDDE), 82-119 (RDCIAVLERISRLADDSEPTVRAELMEQVPHIALFCQE), 127-164 (AFSKFLLPIVVRYLADQNNQVRKTSQAALLALLEQELI), 168-206 (DVETKVCPVLIELTAPDSNDDVKTEAVAIMCKMAPMVGK), 208-246 (ITERLILPRFCEMCCDCRMFHVRKVCAANFGDICSVVGQ), 248-285 (ATEEMLLPRFFQLCSDNVWGVRKACAECFMAVSCATCQ), and 287-324 (IRRTKLSALFINLISDPSRWVRQAAFQSLGPFISTFAN). Disordered regions lie at residues 326–374 (SSSG…SVSN), 413–438 (ESHQEAASNENDKKPGNYKSMLRPEV), and 473–499 (EQNSGGKPSPEGPEEESEGPVPSSPNI). Residues 332–365 (FKEESKSSEEMSVENKNRTRDQEAPEDVQVRPED) show a composition bias toward basic and acidic residues. HEAT repeat units lie at residues 505 to 542 (KELEEMIENLEPHIDDPDVKAQVEVLSAALRASSLDAH), 568 to 606 (INQEDSVPLISDAVENMDSTLHYIHSDSDLSNNSSFSPD), 698 to 734 (LTAADLVPIFNGFLKDLDEVRIGVLKHLHDFLKLLHI), 799 to 837 (WISYKLVSEMVKKLHAATPPTFGVDLINELVENFGRCPK), and 861 to 898 (QFAVHLMPHLLTLANDRVPNVRVLLAKTLRQTLLEKDY). Ser-935 is subject to Phosphoserine.

As to quaternary structure, serine/threonine-protein phosphatase 4 (PP4) occurs in different assemblies of the catalytic and one or more regulatory subunits. Component of the PP4 complex PPP4C-PPP4R1. Interacts with HDAC3. In terms of assembly, (Microbial infection) Interacts with merkel polyomavirus small tumor antigen; this interaction bridges small tumor antigen with NEMO to inhibit NF-kappa-B. In terms of tissue distribution, widely expressed with high expression in cultured mesangial cells. Isoform 1 and isoform 2 are expressed in renal tissues.

In terms of biological role, regulatory subunit of serine/threonine-protein phosphatase 4. May play a role in regulation of cell division in renal glomeruli. The PPP4C-PPP4R1 PP4 complex may play a role in dephosphorylation and regulation of HDAC3. Plays a role in the inhibition of TNF-induced NF-kappa-B activation by regulating the dephosphorylation of TRAF2. Its function is as follows. (Microbial infection) Participates in merkel polyomavirus-mediated inhibition of NF-kappa-B by bridging viral small tumor antigen with NEMO. This chain is Serine/threonine-protein phosphatase 4 regulatory subunit 1 (PPP4R1), found in Homo sapiens (Human).